The following is a 122-amino-acid chain: Large ribosomal subunit protein uL14 (122 aa).

The protein belongs to the universal ribosomal protein uL14 family. Part of the 50S ribosomal subunit. Forms a cluster with proteins L3 and L19. In the 70S ribosome, L14 and L19 interact and together make contacts with the 16S rRNA in bridges B5 and B8.

Functionally, binds to 23S rRNA. Forms part of two intersubunit bridges in the 70S ribosome. The protein is Large ribosomal subunit protein uL14 of Kineococcus radiotolerans (strain ATCC BAA-149 / DSM 14245 / SRS30216).